The following is a 246-amino-acid chain: Uridylate kinase (246 aa).

20–23 (KISG) is a binding site for ATP. The involved in allosteric activation by GTP stretch occupies residues 28-33 (GDQGYG). Gly62 serves as a coordination point for UMP. The ATP site is built by Gly63 and Arg67. UMP is bound by residues Asp82 and 143–150 (TGNPYFTT). Residues Thr170, Tyr176, and Asp179 each coordinate ATP.

The protein belongs to the UMP kinase family. As to quaternary structure, homohexamer.

Its subcellular location is the cytoplasm. It catalyses the reaction UMP + ATP = UDP + ADP. The protein operates within pyrimidine metabolism; CTP biosynthesis via de novo pathway; UDP from UMP (UMPK route): step 1/1. Its activity is regulated as follows. Allosterically activated by GTP. Inhibited by UTP. In terms of biological role, catalyzes the reversible phosphorylation of UMP to UDP. In Cereibacter sphaeroides (strain ATCC 17029 / ATH 2.4.9) (Rhodobacter sphaeroides), this protein is Uridylate kinase.